A 303-amino-acid chain; its full sequence is ATP phosphoribosyltransferase (303 aa).

Belongs to the ATP phosphoribosyltransferase family. Long subfamily. Requires Mg(2+) as cofactor.

The protein localises to the cytoplasm. It catalyses the reaction 1-(5-phospho-beta-D-ribosyl)-ATP + diphosphate = 5-phospho-alpha-D-ribose 1-diphosphate + ATP. Its pathway is amino-acid biosynthesis; L-histidine biosynthesis; L-histidine from 5-phospho-alpha-D-ribose 1-diphosphate: step 1/9. Its activity is regulated as follows. Feedback inhibited by histidine. In terms of biological role, catalyzes the condensation of ATP and 5-phosphoribose 1-diphosphate to form N'-(5'-phosphoribosyl)-ATP (PR-ATP). Has a crucial role in the pathway because the rate of histidine biosynthesis seems to be controlled primarily by regulation of HisG enzymatic activity. This chain is ATP phosphoribosyltransferase, found in Stenotrophomonas maltophilia (strain R551-3).